The sequence spans 644 residues: Threonine--tRNA ligase (644 aa).

The 61-residue stretch at 1–61 (MPVITLPDGS…EKDTKLTIIT (61 aa)) folds into the TGS domain. A catalytic region spans residues 242 to 535 (DHRRIGADLD…LIEHYEGKFP (294 aa)). Zn(2+)-binding residues include cysteine 335, histidine 386, and histidine 512.

This sequence belongs to the class-II aminoacyl-tRNA synthetase family. In terms of assembly, homodimer. Zn(2+) is required as a cofactor.

Its subcellular location is the cytoplasm. It catalyses the reaction tRNA(Thr) + L-threonine + ATP = L-threonyl-tRNA(Thr) + AMP + diphosphate + H(+). Catalyzes the attachment of threonine to tRNA(Thr) in a two-step reaction: L-threonine is first activated by ATP to form Thr-AMP and then transferred to the acceptor end of tRNA(Thr). Also edits incorrectly charged L-seryl-tRNA(Thr). This is Threonine--tRNA ligase from Nitrosococcus oceani (strain ATCC 19707 / BCRC 17464 / JCM 30415 / NCIMB 11848 / C-107).